Reading from the N-terminus, the 118-residue chain is D-dopachrome decarboxylase (118 aa).

Proline 2 is modified (N-acetylproline).

Belongs to the MIF family. As to quaternary structure, homotrimer.

The protein localises to the cytoplasm. It catalyses the reaction D-dopachrome + H(+) = 5,6-dihydroxyindole + CO2. Tautomerization of D-dopachrome with decarboxylation to give 5,6-dihydroxyindole (DHI). This Gallus gallus (Chicken) protein is D-dopachrome decarboxylase (DDT).